We begin with the raw amino-acid sequence, 1070 residues long: DNA-directed RNA polymerase subunit beta (1070 aa).

The protein belongs to the RNA polymerase beta chain family. As to quaternary structure, in plastids the minimal PEP RNA polymerase catalytic core is composed of four subunits: alpha, beta, beta', and beta''. When a (nuclear-encoded) sigma factor is associated with the core the holoenzyme is formed, which can initiate transcription.

Its subcellular location is the plastid. It localises to the chloroplast. It catalyses the reaction RNA(n) + a ribonucleoside 5'-triphosphate = RNA(n+1) + diphosphate. In terms of biological role, DNA-dependent RNA polymerase catalyzes the transcription of DNA into RNA using the four ribonucleoside triphosphates as substrates. The polypeptide is DNA-directed RNA polymerase subunit beta (Spinacia oleracea (Spinach)).